The primary structure comprises 150 residues: FAD synthase (150 aa).

ATP-binding positions include 8 to 9 (AF), 13 to 16 (HPGH), Asp95, and His122.

Belongs to the archaeal FAD synthase family. In terms of assembly, homodimer. The cofactor is a divalent metal cation.

It carries out the reaction FMN + ATP + H(+) = FAD + diphosphate. It participates in cofactor biosynthesis; FAD biosynthesis; FAD from FMN: step 1/1. Its function is as follows. Catalyzes the transfer of the AMP portion of ATP to flavin mononucleotide (FMN) to produce flavin adenine dinucleotide (FAD) coenzyme. This chain is FAD synthase, found in Methanobrevibacter ruminantium (strain ATCC 35063 / DSM 1093 / JCM 13430 / OCM 146 / M1) (Methanobacterium ruminantium).